The sequence spans 182 residues: uncharacterized protein (182 aa).

The protein belongs to the staphylococcal tandem lipoprotein family.

This is an uncharacterized protein from Staphylococcus haemolyticus (strain JCSC1435).